A 164-amino-acid chain; its full sequence is Phosphopantetheine adenylyltransferase (164 aa).

Substrate is bound at residue Ser10. Residues 10-11 (SF) and His18 contribute to the ATP site. Residues Lys42, Leu74, and Arg88 each contribute to the substrate site. Residues 89-91 (GLR), Glu99, and 124-130 (YSFLSSS) each bind ATP.

This sequence belongs to the bacterial CoaD family. Homohexamer. Mg(2+) is required as a cofactor.

The protein localises to the cytoplasm. It catalyses the reaction (R)-4'-phosphopantetheine + ATP + H(+) = 3'-dephospho-CoA + diphosphate. Its pathway is cofactor biosynthesis; coenzyme A biosynthesis; CoA from (R)-pantothenate: step 4/5. In terms of biological role, reversibly transfers an adenylyl group from ATP to 4'-phosphopantetheine, yielding dephospho-CoA (dPCoA) and pyrophosphate. The protein is Phosphopantetheine adenylyltransferase of Exiguobacterium sibiricum (strain DSM 17290 / CCUG 55495 / CIP 109462 / JCM 13490 / 255-15).